The following is a 379-amino-acid chain: Stimulator of interferon genes protein (379 aa).

The Cytoplasmic portion of the chain corresponds to 1 to 17 (MPYSNLHPSIPRPRSYR). The segment at 1 to 190 (MPYSNLHPSI…MFNQLHNNML (190 aa)) is mediates interaction with ZDHHC1 and ZDHHC11. A helical membrane pass occupies residues 18-34 (FKLAAFVLLVGSLMSLW). The Lumenal segment spans residues 35 to 44 (MTGEPPSHTL). The helical transmembrane segment at 45–69 (HYLALHVASQQLGLLLKKLCCLAEE) threads the bilayer. The Cytoplasmic segment spans residues 70 to 91 (LCHVQSRYQGSYWKAVRACVGS). Cys-88 carries the S-palmitoyl cysteine lipid modification. Residues 92-106 (PICFMALILLSFYFY) form a helical membrane-spanning segment. The Lumenal portion of the chain corresponds to 107-116 (CSLENTSDLR). Residues 117-134 (LAWHLGILVLSKSLSMTL) traverse the membrane as a helical segment. Over 135-379 (DLQSLAPAEV…QPLPLRTDLI (245 aa)) the chain is Cytoplasmic. Residue Lys-151 forms a Glycyl lysine isopeptide (Lys-Gly) (interchain with G-Cter in ubiquitin) linkage. Residues 153–340 (FNVAHGLAWS…RHIRQEEKEE (188 aa)) are cyclic dinucleotide-binding domain (CBD). Residue 162–167 (SYYIGY) participates in 2',3'-cGAMP binding. Gly-166 serves as a coordination point for 3',3'-c-di-GMP. Tyr-167 provides a ligand contact to 2',3'-cUAMP. Residue Lys-236 forms a Glycyl lysine isopeptide (Lys-Gly) (interchain with G-Cter in ubiquitin) linkage. A 2',3'-cUAMP-binding site is contributed by Arg-238. Residues 238 to 241 (RAYS) and Thr-263 each bind 2',3'-cGAMP. Residues 238–241 (RAYS) and Thr-263 each bind 3',3'-c-di-GMP. A Phosphoserine modification is found at Ser-241. Position 263 (Thr-263) interacts with 2',3'-cUAMP. Residue Lys-338 forms a Glycyl lysine isopeptide (Lys-Gly) (interchain with G-Cter in SUMO) linkage. A C-terminal tail (CTT) region spans residues 340 to 379 (EVTMSGPPTSVAPRPSLLSQEPRLLISGMEQPLPLRTDLI). Residue Ser-355 is modified to Phosphoserine. Residues Ser-358 and Ser-366 each carry the phosphoserine; by TBK1 modification. Positions 363 to 366 (LLIS) match the pLxIS motif motif.

The protein belongs to the STING family. As to quaternary structure, homodimer; forms a homodimer in absence of cyclic nucleotide (c-di-GMP or cGAMP); 'Lys-63'-linked ubiquitination at Lys-151 is required for homodimerization. Homotetramer; in presence of cyclic nucleotide (c-di-GMP or cGAMP), forms tetramers and higher-order oligomers through side-by-side packing. Interacts (when phosphorylated) with IRF3; following activation and phosphorylation on the pLxIS motif by TBK1, recruits IRF3. Interacts with RIGI, MAVS and SSR2. Interacts with RNF5 and TRIM56. Interacts with TBK1; when homodimer, leading to subsequent production of IFN-beta. Interacts with IFIT1 and IFIT2. Interacts with TRIM29; this interaction induces STING1 ubiquitination and subsequent degradation. Associates with the MHC-II complex. Interacts with STEEP1; interaction takes place upon cGAMP-activation and STING1 phosphorylation by MAP3K7/TAK1 and promotes STING1 translocation to COPII vesicles. Interacts with SEC24A, SEC24B and SEC24C; promoting translocation to COPII vesicles. Interacts (when ubiquitinated) with SQSTM1; leading to relocalization to autophagosomes. Interacts with SURF4. Interacts with HNRNPA2B1. Interacts with ZDHHC1; ZDHHC1 constitutively interacts with STING1 and in presence of DNA viruses activates it by promoting its cGAMP-induced oligomerization and the recruitment of downstream signaling components. Interacts with ZDHHC11; in presence of DNA viruses promotes the recruitment of IRF3 to STING1. Interacts with TOMM70. Interacts with TAB1; promoting recruitment of TAB1 to the endoplasmic reticulum membrane and subsequent activation of MAP3K7/TAK1. Interacts (via transmembrane domain) with TMEM203. Interacts with DDX41. Post-translationally, phosphorylation by TBK1 leads to activation and production of IFN-beta. Following cyclic nucleotide (c-di-GMP or cGAMP)-binding, activation and translocation from the endoplasmic reticulum, STING1 is phosphorylated by TBK1 at Ser-366 in the pLxIS motif. The phosphorylated pLxIS motif constitutes an IRF3-binding motif, leading to recruitment of the transcription factor IRF3 to induce type-I interferons and other cytokines. Phosphorylated on tyrosine residues upon MHC-II aggregation. Dephosphorylation by PPP6C leads to inactivation and decreased production of IFN-beta. Phosphorylation at Ser-358 is also required to activate IRF3. Phosphorylation at Ser-355 by MAP3K7/TAK1 facilitates its interaction with STEEP1, promoting STING1 translocation to COPII vesicles. In terms of processing, ubiquitinated. Ubiquitinated via 'Lys-63'-linked ubiquitin chains in response to double-stranded DNA treatment, leading to relocalization to autophagosomes and subsequent degradation; this process is dependent on SQSTM1. 'Lys-63'-linked ubiquitination mediated by TRIM56 at Lys-151 promotes homodimerization and recruitment of the antiviral kinase TBK1 and subsequent production of IFN-beta. 'Lys-48'-linked polyubiquitination at Lys-151 occurring after viral infection is mediated by RNF5 and leads to proteasomal degradation. 'Lys-11'-linked polyubiquitination at Lys-151 by RNF26 leads to stabilize STING1: it protects STING1 from RNF5-mediated 'Lys-48'-linked polyubiquitination. 'Lys-33'-linked and 'Lys-48'-linked deubiquitinated by USP20; leading to its stabilization and promotion of innate antiviral response. 'Lys-48'-linked deubiquitinated by USP44; leading to its stabilization and promotion of innate antiviral response. Deubiquitinated by USP13; leading to inhibition of innate antiviral response. 'Lys-63'-linked deubiquitinated by USP49; leading to inhibition of the subsequent recruitment of TBK1 to the signaling complex. 'Lys-63'-linked ubiquitination mediated by RNF39 promotes the activation of the cGAS-STING pathway. Sumoylated at Lys-338 by TRIM38 during the early phase of viral infection, promoting its stability by preventing its relocalization to autophagosomes and subsequent degradation. Desumoylated by SENP2 during the late phase of viral infection. Post-translationally, palmitoylation takes place in the Golgi apparatus and creates a platform for the recruitment of TBK1.

The protein resides in the endoplasmic reticulum membrane. It localises to the cytoplasm. The protein localises to the perinuclear region. It is found in the endoplasmic reticulum-Golgi intermediate compartment membrane. Its subcellular location is the golgi apparatus membrane. The protein resides in the cytoplasmic vesicle. It localises to the autophagosome membrane. The protein localises to the mitochondrion outer membrane. It is found in the cell membrane. It catalyses the reaction H(+)(in) = H(+)(out). Its activity is regulated as follows. In contrast to mouse protein, not activated by anticancer molecule 5,6-dimethylxanthenone 4-acetic acid (DMXAA). Its function is as follows. Facilitator of innate immune signaling that acts as a sensor of cytosolic DNA from bacteria and viruses and promotes the production of type I interferon (IFN-alpha and IFN-beta). Innate immune response is triggered in response to non-CpG double-stranded DNA from viruses and bacteria delivered to the cytoplasm. Acts by binding cyclic dinucleotides: recognizes and binds cyclic di-GMP (c-di-GMP), a second messenger produced by bacteria, cyclic UMP-AMP (2',3'-cUAMP), and cyclic GMP-AMP (cGAMP), a messenger produced by CGAS in response to DNA virus in the cytosol. Upon binding to c-di-GMP, cUAMP or cGAMP, STING1 oligomerizes, translocates from the endoplasmic reticulum and is phosphorylated by TBK1 on the pLxIS motif, leading to recruitment and subsequent activation of the transcription factor IRF3 to induce expression of type I interferon and exert a potent anti-viral state. Exhibits 2',3' phosphodiester linkage-specific ligand recognition: can bind both 2'-3' linked cGAMP (2'-3'-cGAMP) and 3'-3' linked cGAMP but is preferentially activated by 2'-3' linked cGAMP. The preference for 2'-3'-cGAMP, compared to other linkage isomers is probably due to the ligand itself, whichs adopts an organized free-ligand conformation that resembles the STING1-bound conformation and pays low energy costs in changing into the active conformation. In addition to promote the production of type I interferons, plays a direct role in autophagy. Following cGAMP-binding, STING1 buds from the endoplasmic reticulum into COPII vesicles, which then form the endoplasmic reticulum-Golgi intermediate compartment (ERGIC). The ERGIC serves as the membrane source for WIPI2 recruitment and LC3 lipidation, leading to formation of autophagosomes that target cytosolic DNA or DNA viruses for degradation by the lysosome. Promotes autophagy by acting as a proton channel that directs proton efflux from the Golgi to facilitate MAP1LC3B/LC3B lipidation. The autophagy- and interferon-inducing activities can be uncoupled and autophagy induction is independent of TBK1 phosphorylation. Autophagy is also triggered upon infection by bacteria: following c-di-GMP-binding, which is produced by live Gram-positive bacteria, promotes reticulophagy. May be involved in translocon function, the translocon possibly being able to influence the induction of type I interferons. May be involved in transduction of apoptotic signals via its association with the major histocompatibility complex class II (MHC-II). This chain is Stimulator of interferon genes protein, found in Rattus norvegicus (Rat).